We begin with the raw amino-acid sequence, 320 residues long: Putative thiosulfate sulfurtransferase (320 aa).

Residues M1 to A37 form the signal peptide. 2 consecutive Rhodanese domains span residues N56–K166 and L194–T315. Catalysis depends on C274, which acts as the Cysteine persulfide intermediate.

It is found in the periplasm. It carries out the reaction thiosulfate + hydrogen cyanide = thiocyanate + sulfite + 2 H(+). Functionally, may be a sulfotransferase involved in the transport of sulfate. Displays very low rhodanese activity. This Synechococcus elongatus (strain ATCC 33912 / PCC 7942 / FACHB-805) (Anacystis nidulans R2) protein is Putative thiosulfate sulfurtransferase (rhdA).